A 327-amino-acid chain; its full sequence is MSKKLRNFLVRIIVAAFASFAVMAIPPYHHNTVLAKTVSVNQTYGEYKDYYTVIGESNIDQSAFPKIYKTTERVYKGQGTSEKRVTVSDVVYNPLDGYKRSTGAYGVVTKDMIDMSKGYREKWETNPEPSGWFRFYNRADNEEISEKEYDSRRTKSYKVTNNVPVVLTTLKGKKYNSHLFVASHLFADSLGGKSIRKNAITGTQMQNVGTRKGGMQYIEKKVLSHITKNPDVYVFYSAIPEYQGAELLARSVLVSALSSDGVINETVRVFNTADGFNINYEKGGLLTESPVSEIDNIEDSTTDEIENSVDDSEEIVYNDTTTEEEEN.

The segment at residues 1 to 24 is a signal peptide (or 35); that stretch reads MSKKLRNFLVRIIVAAFASFAVMA. The interval 299–327 is disordered; it reads DSTTDEIENSVDDSEEIVYNDTTTEEEEN.

The catalysed reaction is Endonucleolytic cleavage to 5'-phosphodinucleotide and 5'-phosphooligonucleotide end-products.. May have a role in S.equisimilis virulence. The sequence is that of Deoxyribonuclease (sdc) from Streptococcus dysgalactiae subsp. equisimilis (Streptococcus equisimilis).